Reading from the N-terminus, the 191-residue chain is Fe/S biogenesis protein NfuA (191 aa).

[4Fe-4S] cluster contacts are provided by cysteine 149 and cysteine 152.

The protein belongs to the NfuA family. As to quaternary structure, homodimer. The cofactor is [4Fe-4S] cluster.

Its function is as follows. Involved in iron-sulfur cluster biogenesis. Binds a 4Fe-4S cluster, can transfer this cluster to apoproteins, and thereby intervenes in the maturation of Fe/S proteins. Could also act as a scaffold/chaperone for damaged Fe/S proteins. This chain is Fe/S biogenesis protein NfuA, found in Pectobacterium atrosepticum (strain SCRI 1043 / ATCC BAA-672) (Erwinia carotovora subsp. atroseptica).